A 297-amino-acid polypeptide reads, in one-letter code: MKHFIEISQLSSEQIESLLQRALYFKHTKQYPSYSQSIIANLFYENSTRTRISFELAERHLAMSVVNLDLETSSETKGEAIEDTIRTLAAMGIQYFVIRHKQDGLQQNLANKLGDTVHIINAGDGTHAHPSQAILDMVTIVEQKKQLDKLKIAILGNIKHSRVANSFQCICSKLGVGELVLISPEIWQPSQVHFGRVTDNLNEGLEGADVVICLRVQKERLLQDDHLDLDFYRNNFALTQKSLSYAKPDAMVMHPGPMNRGVEIDSEVADGNQSCILQQVTNGVYARMAILESLIAS.

The carbamoyl phosphate site is built by Arg49 and Thr50. Lys77 contacts L-aspartate. Carbamoyl phosphate contacts are provided by Arg99, His129, and Gln132. L-aspartate-binding residues include Arg162 and Arg215. 2 residues coordinate carbamoyl phosphate: Gly256 and Pro257.

It belongs to the aspartate/ornithine carbamoyltransferase superfamily. ATCase family. In terms of assembly, heterododecamer (2C3:3R2) of six catalytic PyrB chains organized as two trimers (C3), and six regulatory PyrI chains organized as three dimers (R2).

The catalysed reaction is carbamoyl phosphate + L-aspartate = N-carbamoyl-L-aspartate + phosphate + H(+). The protein operates within pyrimidine metabolism; UMP biosynthesis via de novo pathway; (S)-dihydroorotate from bicarbonate: step 2/3. In terms of biological role, catalyzes the condensation of carbamoyl phosphate and aspartate to form carbamoyl aspartate and inorganic phosphate, the committed step in the de novo pyrimidine nucleotide biosynthesis pathway. This is Aspartate carbamoyltransferase catalytic subunit from Legionella pneumophila (strain Lens).